The following is a 290-amino-acid chain: UPF0761 membrane protein YihY (290 aa).

6 helical membrane-spanning segments follow: residues 44–64 (LLSL…FPMF), 104–124 (VGAC…DSAL), 140–160 (FAVY…SLAI), 183–203 (ILPL…VPTT), 210–230 (ALVG…GFAL), and 244–264 (VLAV…IVLL).

The protein belongs to the UPF0761 family.

The protein localises to the cell inner membrane. The sequence is that of UPF0761 membrane protein YihY from Salmonella paratyphi B (strain ATCC BAA-1250 / SPB7).